A 60-amino-acid polypeptide reads, in one-letter code: Myrmicitoxin(1)-Pr4a (60 aa).

The N-terminal stretch at 1 to 23 (MKAIIFLFAVLTVVAIIIPIISG) is a signal peptide. Residues 24–33 (EPNAGPHAAS) constitute a propeptide that is removed on maturation. Glutamine 59 carries the glutamine amide modification.

This sequence belongs to the formicidae venom clade 2 family. Expressed by the venom gland.

It localises to the secreted. In terms of biological role, toxin that causes a rapid and irreversible paralysis when intrathoracically injected into insects (blowflies). Does not cause spontaneous nocifensive behaviors by intraplantar injection in mice. This Pogonomyrmex rugosus (Desert harvester ant) protein is Myrmicitoxin(1)-Pr4a.